A 508-amino-acid chain; its full sequence is Lysine--tRNA ligase (508 aa).

Glu-418 and Glu-425 together coordinate Mg(2+).

This sequence belongs to the class-II aminoacyl-tRNA synthetase family. Homodimer. Requires Mg(2+) as cofactor.

The protein localises to the cytoplasm. It carries out the reaction tRNA(Lys) + L-lysine + ATP = L-lysyl-tRNA(Lys) + AMP + diphosphate. The polypeptide is Lysine--tRNA ligase (Burkholderia cenocepacia (strain HI2424)).